A 210-amino-acid polypeptide reads, in one-letter code: Glutathione S-transferase P 2 (210 aa).

In terms of domain architecture, GST N-terminal spans 1-82 (SGYTLTYFPL…LLARYGLSGS (82 aa)). Residues tyrosine 7, arginine 13, tryptophan 38, lysine 46, 53–54 (QI), and 66–67 (QS) contribute to the glutathione site. Positions 83–204 (NEREIAINEM…KSEGRKRRPI (122 aa)) constitute a GST C-terminal domain.

The protein belongs to the GST superfamily. Pi family. In terms of assembly, homodimer. Liver, kidney, muscle, skin, lung and ovary.

The enzyme catalyses RX + glutathione = an S-substituted glutathione + a halide anion + H(+). Functionally, conjugation of reduced glutathione to a wide number of exogenous and endogenous hydrophobic electrophiles. This Bufo bufo (European toad) protein is Glutathione S-transferase P 2.